A 300-amino-acid polypeptide reads, in one-letter code: 4-hydroxy-tetrahydrodipicolinate synthase (300 aa).

Thr-55 provides a ligand contact to pyruvate. The active-site Proton donor/acceptor is the Tyr-143. The Schiff-base intermediate with substrate role is filled by Lys-171. A pyruvate-binding site is contributed by Ile-211.

It belongs to the DapA family. Homotetramer; dimer of dimers.

The protein resides in the cytoplasm. It carries out the reaction L-aspartate 4-semialdehyde + pyruvate = (2S,4S)-4-hydroxy-2,3,4,5-tetrahydrodipicolinate + H2O + H(+). Its pathway is amino-acid biosynthesis; L-lysine biosynthesis via DAP pathway; (S)-tetrahydrodipicolinate from L-aspartate: step 3/4. Functionally, catalyzes the condensation of (S)-aspartate-beta-semialdehyde [(S)-ASA] and pyruvate to 4-hydroxy-tetrahydrodipicolinate (HTPA). In Mycobacterium leprae (strain Br4923), this protein is 4-hydroxy-tetrahydrodipicolinate synthase.